A 395-amino-acid polypeptide reads, in one-letter code: MTLPVNPADNLAALIRCPSVTPAEGGALTALEKMLKLMGFSANRPVFSDDNTPDIENLYARKSGNGPHLMFAGHTDVVPPGDEKDWKHPPFAAAIEDGVMYGRGAVDMKGGIACFVAAVARHIEKHGNIKGSISFLITGDEEGPAVNGTVKLLEWAKQRGESWDASIVGEPTNPNALGDMIKIGRRGSLSGTITVHGVQGHAAYPHLAENPVRGIVTLVDSLLYPAFDEGTANFQASNLEVTTIDVGNKATNVIPNKATASFNIRFNDTWTAESLQAEIISRLERAARDNRLRQGRETPIKYELTWRERPSHVFLTHDEKLIGTLTASVEAVTGKRPELSTSGGTSDARFIKDYCPVVEFGLTGQTMHMVDERVALADLEGLTQIYERFIADFFG.

Residue histidine 74 participates in Zn(2+) binding. The active site involves aspartate 76. Residue aspartate 107 coordinates Zn(2+). Catalysis depends on glutamate 141, which acts as the Proton acceptor. Positions 142, 170, and 368 each coordinate Zn(2+).

The protein belongs to the peptidase M20A family. DapE subfamily. Homodimer. Requires Zn(2+) as cofactor. The cofactor is Co(2+).

It catalyses the reaction N-succinyl-(2S,6S)-2,6-diaminopimelate + H2O = (2S,6S)-2,6-diaminopimelate + succinate. It participates in amino-acid biosynthesis; L-lysine biosynthesis via DAP pathway; LL-2,6-diaminopimelate from (S)-tetrahydrodipicolinate (succinylase route): step 3/3. Catalyzes the hydrolysis of N-succinyl-L,L-diaminopimelic acid (SDAP), forming succinate and LL-2,6-diaminopimelate (DAP), an intermediate involved in the bacterial biosynthesis of lysine and meso-diaminopimelic acid, an essential component of bacterial cell walls. The protein is Succinyl-diaminopimelate desuccinylase of Brucella canis (strain ATCC 23365 / NCTC 10854 / RM-666).